A 360-amino-acid polypeptide reads, in one-letter code: UPF0283 membrane protein Asuc_0957 (360 aa).

Helical transmembrane passes span 74–94 (VIAV…QWLI), 102–122 (WIYF…LSAL), and 215–235 (AVEN…MLFL).

This sequence belongs to the UPF0283 family.

It is found in the cell inner membrane. This chain is UPF0283 membrane protein Asuc_0957, found in Actinobacillus succinogenes (strain ATCC 55618 / DSM 22257 / CCUG 43843 / 130Z).